A 68-amino-acid chain; its full sequence is MAKGKDARVRVILECTSCTRNGANAKKESPGISRYITEKNRHNTPSRLELKKFCPYCSKHMIHAEIKK.

The protein belongs to the bacterial ribosomal protein bL33 family.

Its subcellular location is the plastid. It is found in the chloroplast. In Amborella trichopoda, this protein is Large ribosomal subunit protein bL33c.